Here is a 675-residue protein sequence, read N- to C-terminus: Vacuolar protein sorting-associated protein 5 (675 aa).

3 disordered regions span residues 1–26 (MDYEDNLEAPVWDELNHEGDKTQSLV), 65–84 (EWKDPGLSVAGNPQLEEHDN), and 165–219 (RAQR…RREN). Over residues 168–180 (RNSKRNHSLKAKR) the composition is skewed to basic residues. The segment covering 195–204 (PLKKAEKENE) has biased composition (basic and acidic residues). Positions 279–394 (VAFKVEVKDP…LFLTSDDFSS (116 aa)) constitute a PX domain. 3 residues coordinate a 1,2-diacyl-sn-glycero-3-phospho-(1D-myo-inositol-3-phosphate): R320, K346, and R360.

Belongs to the sorting nexin family. In terms of assembly, component of the retromer complex which consists of VPS29, VPS26, VPS35, VPS5 and VPS17. Component of a retromer subcomplex consisting of VPSD5 and VPS17. In terms of processing, phosphorylated on serine residue(s).

It is found in the cytoplasm. The protein resides in the golgi apparatus membrane. Its subcellular location is the endosome membrane. Plays a role in vesicular protein sorting. Required for retention of late Golgi membrane proteins and vacuolar biogenesis. Component of the membrane-associated retromer complex which is essential in endosome-to-Golgi retrograde transport. The VPS5-VPS17 subcomplex may assemble onto the membrane to promote vesicle formation. This chain is Vacuolar protein sorting-associated protein 5 (VPS5), found in Saccharomyces cerevisiae (strain ATCC 204508 / S288c) (Baker's yeast).